We begin with the raw amino-acid sequence, 86 residues long: Large ribosomal subunit protein bL27 (86 aa).

This sequence belongs to the bacterial ribosomal protein bL27 family.

In Flavobacterium psychrophilum (strain ATCC 49511 / DSM 21280 / CIP 103535 / JIP02/86), this protein is Large ribosomal subunit protein bL27.